The primary structure comprises 431 residues: tRNA (adenine(37)-N6)-methyltransferase (431 aa).

In terms of domain architecture, TsaA-like spans 30-168 (TEPIGYLESC…YIADYDSPQN (139 aa)). Residues 47-49 (PRQ), 90-91 (HK), Arg117, Leu127, and 148-151 (IHGT) each bind S-adenosyl-L-methionine. 2 disordered regions span residues 167–189 (QNLEPQTKHHKLRAAGPSDATAN) and 201–243 (KAQP…DRER). The segment covering 207–243 (STKEKPKCREHRTSDENSQKFRDTSEIQHTLPEDRER) has biased composition (basic and acidic residues).

Belongs to the tRNA methyltransferase O family.

It catalyses the reaction N(6)-L-threonylcarbamoyladenosine(37) in tRNA + S-adenosyl-L-methionine = N(6)-methyl,N(6)-L-threonylcarbamoyladenosine(37) in tRNA + S-adenosyl-L-homocysteine + H(+). S-adenosyl-L-methionine-dependent methyltransferase responsible for the addition of the methyl group in the formation of N6-methyl-N6-threonylcarbamoyladenosine at position 37 (m(6)t(6)A37) of the tRNA anticodon loop of tRNA(Ser)(GCU). The methyl group of m(6)t(6)A37 may improve the efficiency of the tRNA decoding ability. May bind to tRNA. The sequence is that of tRNA (adenine(37)-N6)-methyltransferase from Rattus norvegicus (Rat).